A 152-amino-acid chain; its full sequence is SsrA-binding protein (152 aa).

It belongs to the SmpB family.

The protein resides in the cytoplasm. Functionally, required for rescue of stalled ribosomes mediated by trans-translation. Binds to transfer-messenger RNA (tmRNA), required for stable association of tmRNA with ribosomes. tmRNA and SmpB together mimic tRNA shape, replacing the anticodon stem-loop with SmpB. tmRNA is encoded by the ssrA gene; the 2 termini fold to resemble tRNA(Ala) and it encodes a 'tag peptide', a short internal open reading frame. During trans-translation Ala-aminoacylated tmRNA acts like a tRNA, entering the A-site of stalled ribosomes, displacing the stalled mRNA. The ribosome then switches to translate the ORF on the tmRNA; the nascent peptide is terminated with the 'tag peptide' encoded by the tmRNA and targeted for degradation. The ribosome is freed to recommence translation, which seems to be the essential function of trans-translation. The sequence is that of SsrA-binding protein from Helicobacter pylori (strain HPAG1).